An 89-amino-acid chain; its full sequence is MNKNEKMVRSLMGTVVSNKMNDTVVVRVERRVKHPKYGKFIKRSTKIHAHDKGNECQIGDIVTIRECRPISKTKSWTLVKINERAEKVE.

The protein belongs to the universal ribosomal protein uS17 family. As to quaternary structure, part of the 30S ribosomal subunit.

Functionally, one of the primary rRNA binding proteins, it binds specifically to the 5'-end of 16S ribosomal RNA. This is Small ribosomal subunit protein uS17 from Coxiella burnetii (strain RSA 331 / Henzerling II).